We begin with the raw amino-acid sequence, 90 residues long: MKIYKVDKTLVSTNRIAMMEHKPLLVVREKDGGTPQVAVDPVGCKPGDWVICCGSSAARDATGVKGYPSDLTIVGIIDKWEVPQDADTTS.

The 78-residue stretch at 1–78 folds into the BMV domain; sequence MKIYKVDKTL…SDLTIVGIID (78 aa).

Belongs to the CcmL/EutN family. CsoS4 subfamily. Homopentamer.

The protein localises to the carboxysome. In terms of biological role, probably forms vertices in the carboxysome, a polyhedral inclusion where RuBisCO (ribulose bisphosphate carboxylase, cbbL-cbbS) is sequestered. Has been modeled to induce curvature upon insertion into an otherwise flat hexagonal layer of major carboxysome subunits. The chain is Carboxysome shell vertex protein CsoS4A from Hydrogenovibrio crunogenus (strain DSM 25203 / XCL-2) (Thiomicrospira crunogena).